A 666-amino-acid chain; its full sequence is DNA mismatch repair protein MutL (666 aa).

This sequence belongs to the DNA mismatch repair MutL/HexB family.

Its function is as follows. This protein is involved in the repair of mismatches in DNA. It is required for dam-dependent methyl-directed DNA mismatch repair. May act as a 'molecular matchmaker', a protein that promotes the formation of a stable complex between two or more DNA-binding proteins in an ATP-dependent manner without itself being part of a final effector complex. This is DNA mismatch repair protein MutL from Clostridium botulinum (strain Okra / Type B1).